We begin with the raw amino-acid sequence, 492 residues long: Variant surface glycoprotein MITAT 1.1 (492 aa).

Residues Met-1–Ala-32 form the signal peptide. 2 cysteine pairs are disulfide-bonded: Cys-47/Cys-177 and Cys-155/Cys-222. Asn-298 and Asn-471 each carry an N-linked (GlcNAc...) asparagine glycan. The GPI-anchor amidated serine moiety is linked to residue Ser-475. A propeptide spans Asn-476 to Phe-492 (removed in mature form).

Its subcellular location is the cell membrane. VSG forms a coat on the surface of the parasite. The trypanosome evades the immune response of the host by expressing a series of antigenically distinct VSGs from an estimated 1000 VSG genes. The protein is Variant surface glycoprotein MITAT 1.1 of Trypanosoma brucei brucei.